A 99-amino-acid chain; its full sequence is HssA/B-like protein 41 (99 aa).

Residues 1-29 (MTLFSSISSISNPMTSSKSSISSFGSGTS) form a disordered region.

Belongs to the hssA/B family.

This chain is HssA/B-like protein 41 (hssl41), found in Dictyostelium discoideum (Social amoeba).